The chain runs to 320 residues: Lipoyl synthase (320 aa).

Residues 1 to 27 (MRVEIDHRNSGGGKLRHPEKQHRPDNP) are disordered. Positions 16 to 25 (RHPEKQHRPD) are enriched in basic and acidic residues. Cys61, Cys66, Cys72, Cys87, Cys91, Cys94, and Ser300 together coordinate [4Fe-4S] cluster. In terms of domain architecture, Radical SAM core spans 73 to 289 (WSQRHATMMI…AAMARAKGFL (217 aa)).

Belongs to the radical SAM superfamily. Lipoyl synthase family. Requires [4Fe-4S] cluster as cofactor.

Its subcellular location is the cytoplasm. The enzyme catalyses [[Fe-S] cluster scaffold protein carrying a second [4Fe-4S](2+) cluster] + N(6)-octanoyl-L-lysyl-[protein] + 2 oxidized [2Fe-2S]-[ferredoxin] + 2 S-adenosyl-L-methionine + 4 H(+) = [[Fe-S] cluster scaffold protein] + N(6)-[(R)-dihydrolipoyl]-L-lysyl-[protein] + 4 Fe(3+) + 2 hydrogen sulfide + 2 5'-deoxyadenosine + 2 L-methionine + 2 reduced [2Fe-2S]-[ferredoxin]. It participates in protein modification; protein lipoylation via endogenous pathway; protein N(6)-(lipoyl)lysine from octanoyl-[acyl-carrier-protein]: step 2/2. Its function is as follows. Catalyzes the radical-mediated insertion of two sulfur atoms into the C-6 and C-8 positions of the octanoyl moiety bound to the lipoyl domains of lipoate-dependent enzymes, thereby converting the octanoylated domains into lipoylated derivatives. The sequence is that of Lipoyl synthase from Acidiphilium cryptum (strain JF-5).